A 421-amino-acid chain; its full sequence is UPF0300 protein C737.04 (421 aa).

This sequence belongs to the UPF0300 family.

The protein resides in the cytoplasm. The protein is UPF0300 protein C737.04 of Schizosaccharomyces pombe (strain 972 / ATCC 24843) (Fission yeast).